The sequence spans 499 residues: Zinc finger protein PLAG1 (499 aa).

The disordered stretch occupies residues 1–33 (MATVIPGDLSEVRDTQKAPSGKRKRGESKPRKN). Residues 2-84 (ATVIPGDLSE…SKYKLQRHMA (83 aa)) are interaction with KPNA2. The Nuclear localization signal motif lies at 22–25 (KRKR). 7 consecutive C2H2-type zinc fingers follow at residues 34–56 (FPCQLCDKAFNSVEKLKVHSFSH), 62–86 (YKCTHQDCTKAFVSKYKLQRHMATH), 92–114 (HKCNYCEKMFHRKDHLKNHLHTH), 121–143 (FKCEECGKSYNTKLGFKRHLALH), 150–172 (LTCKVCLQTFESTGVLLEHLKSH), 185–207 (HQCEHCERRFYTRKDVRRHMVVH), and 213–236 (FLCQYCAQRFGRKDHLTRHMKKSH). Positions 41–242 (KAFNSVEKLK…KKSHNQELLK (202 aa)) are decreased nuclear import with localization in the nucleus but also in the cytoplasm. Residues 243–383 (VKTEPVDFLD…SQASSSKLGL (141 aa)) form a repression domain; contains 3 sumoylation motifs and massively decrease transcription activity region. Positions 243-499 (VKTEPVDFLD…TLPRFHQAFQ (257 aa)) are activates transcription; Inhibition of nuclear import due to lack of NLS and KPNA2 interaction. Glycyl lysine isopeptide (Lys-Gly) (interchain with G-Cter in SUMO) cross-links involve residues lysine 244 and lysine 263. A disordered region spans residues 364-400 (QGGAPSSSQDSQASSSKLGLEPQSGSPDDGAGDLSLS). Residues 369–379 (SSSQDSQASSS) show a composition bias toward low complexity. The interval 384 to 499 (EPQSGSPDDG…TLPRFHQAFQ (116 aa)) is massively activates transcription.

This sequence belongs to the krueppel C2H2-type zinc-finger protein family. Interacts with KPNA2, which escorts protein to the nucleus via interaction with nuclear localization signal. Interacts with E3 SUMO-protein ligase PIAS1, PIAS2 and PIAS4. In terms of processing, sumoylated with SUMO1; which inhibits transcriptional activity, but does not affect nuclear localization. Blockers of sumoylation pathway such as SENP3 and inactive UBE2I increases transcriptional capacity. Sumoylation is increased in the presence of PIAS1. Post-translationally, acetylated by lysine acetyltransferase EP300; which activates transcriptional capacity. Lysine residues that are sumoylated also seem to be target for acetylation. In terms of tissue distribution, expressed in heart, spleen, lung, kidney, brain, testis and epididymis but not in salivary glands.

It is found in the nucleus. Transcription factor whose activation results in up-regulation of target genes, such as IGFII, leading to uncontrolled cell proliferation: when overexpressed in cultured cells, higher proliferation rate and transformation are observed. Other target genes such as CRLF1, CRABP2, CRIP2, PIGF are strongly induced in cells with PLAG1 induction. Proto-oncogene whose ectopic expression can trigger the development of pleomorphic adenomas of the salivary gland and lipoblastomas. Cooperates with CBFB-MYH11. This is Zinc finger protein PLAG1 (Plag1) from Rattus norvegicus (Rat).